Reading from the N-terminus, the 653-residue chain is Testicular spindle-associated protein SHCBP1L (653 aa).

A disordered region spans residues Met1–Thr65. Ser8 is modified (phosphoserine). The segment covering Ser28 to Lys41 has biased composition (polar residues). Residues Pro46–Pro56 show a composition bias toward low complexity. Ser53 carries the phosphoserine modification. A coiled-coil region spans residues Ile299 to Glu326. PbH1 repeat units lie at residues Ser493–Thr514, Gly515–Pro537, Gly538–Val571, and Ala574–Gln596. The residue at position 570 (Lys570) is an N6-acetyllysine. Lys645 carries the post-translational modification N6-acetyllysine.

In terms of assembly, interacts with HSPA2; this interaction may promote the recruitment of HSPA2 to the spindle. As to expression, expressed in spermatocytes and elongating spermatids inside the seminiferous tubules (at protein level). Testis-specific.

It is found in the cytoplasm. The protein resides in the cytoskeleton. It localises to the spindle. Testis-specific spindle-associated factor that plays a role in spermatogenesis. In association with HSPA2, participates in the maintenance of spindle integrity during meiosis in male germ cells. This is Testicular spindle-associated protein SHCBP1L from Homo sapiens (Human).